A 345-amino-acid polypeptide reads, in one-letter code: Biotin synthase (345 aa).

The Radical SAM core domain maps to 38–256 (QQVQVSTLLS…IAVARIMMPS (219 aa)). Positions 53, 57, and 60 each coordinate [4Fe-4S] cluster. [2Fe-2S] cluster contacts are provided by cysteine 97, cysteine 128, cysteine 188, and arginine 260.

This sequence belongs to the radical SAM superfamily. Biotin synthase family. Homodimer. The cofactor is [4Fe-4S] cluster. It depends on [2Fe-2S] cluster as a cofactor.

It catalyses the reaction (4R,5S)-dethiobiotin + (sulfur carrier)-SH + 2 reduced [2Fe-2S]-[ferredoxin] + 2 S-adenosyl-L-methionine = (sulfur carrier)-H + biotin + 2 5'-deoxyadenosine + 2 L-methionine + 2 oxidized [2Fe-2S]-[ferredoxin]. Its pathway is cofactor biosynthesis; biotin biosynthesis; biotin from 7,8-diaminononanoate: step 2/2. In terms of biological role, catalyzes the conversion of dethiobiotin (DTB) to biotin by the insertion of a sulfur atom into dethiobiotin via a radical-based mechanism. In Photorhabdus laumondii subsp. laumondii (strain DSM 15139 / CIP 105565 / TT01) (Photorhabdus luminescens subsp. laumondii), this protein is Biotin synthase.